The sequence spans 213 residues: MALIARNAKLLTGTAPFLQRAATIHTTLPSLSQQPASSPATSGGAQPPSMNTPAGISKPAEYVISKVDDLMNWARRGSIWPMTFGLACCAVEMMHAGAARYDFDRFGIIFRPSPRQSDVMIVAGTLTNKMAPALRKVYDQMPEPRWVISMGSCANGGGYYHYSYAVVRGCDRIVPVDIYVPGCPPTAEALLYGILQLQKKINRRKDLLMWWTQ.

Residues 1–31 constitute a mitochondrion transit peptide; the sequence is MALIARNAKLLTGTAPFLQRAATIHTTLPSL. Positions 30-42 are enriched in low complexity; sequence SLSQQPASSPATS. The disordered stretch occupies residues 30–52; the sequence is SLSQQPASSPATSGGAQPPSMNT. The [4Fe-4S] cluster site is built by C88, C89, C153, and C183.

It belongs to the complex I 20 kDa subunit family. As to quaternary structure, complex I is composed of about 45 different subunits. This is a component of the iron-sulfur (IP) fragment of the enzyme. [4Fe-4S] cluster is required as a cofactor.

The protein resides in the mitochondrion. It carries out the reaction a ubiquinone + NADH + 5 H(+)(in) = a ubiquinol + NAD(+) + 4 H(+)(out). Its function is as follows. Core subunit of the mitochondrial membrane respiratory chain NADH dehydrogenase (Complex I) that is believed to belong to the minimal assembly required for catalysis. Complex I functions in the transfer of electrons from NADH to the respiratory chain. The immediate electron acceptor for the enzyme is believed to be ubiquinone. The chain is NADH dehydrogenase [ubiquinone] iron-sulfur protein 7, mitochondrial from Solanum tuberosum (Potato).